Consider the following 589-residue polypeptide: Protein OS-9 homolog (589 aa).

Residues 1-21 (MFSILNKLGIIWLALANISNC) form the signal peptide. 3 N-linked (GlcNAc...) asparagine glycosylation sites follow: Asn-17, Asn-61, and Asn-90. Positions 130-288 (KDCVFAYGSN…VIGVPKLCSL (159 aa)) constitute an MRH domain. Cys-132 and Cys-148 form a disulfide bridge. Trp-143, Gln-155, Asp-241, Arg-247, Glu-270, and Tyr-276 together coordinate a mannooligosaccharide derivative. Intrachain disulfides connect Cys-240–Cys-274 and Cys-255–Cys-286. A glycan (N-linked (GlcNAc...) asparagine) is linked at Asn-426. Residues 497-520 (GKGSALDSTNNDKNNKATAENDKQ) are disordered. A compositionally biased stretch (basic and acidic residues) spans 509–519 (KNNKATAENDK). Residues 586-589 (HDEL) carry the Prevents secretion from ER motif.

Belongs to the OS-9 family. As to quaternary structure, interacts with missfolded ER lumenal proteins.

It localises to the endoplasmic reticulum membrane. Its function is as follows. Lectin involved in the quality control of the secretory pathway. As a member of the endoplasmic reticulum-associated degradation lumenal (ERAD-L) surveillance system, targets misfolded endoplasmic reticulum lumenal glycoproteins for degradation. The polypeptide is Protein OS-9 homolog (YOS9) (Debaryomyces hansenii (strain ATCC 36239 / CBS 767 / BCRC 21394 / JCM 1990 / NBRC 0083 / IGC 2968) (Yeast)).